Reading from the N-terminus, the 54-residue chain is Relaxin (54 aa).

Gln1 is subject to Pyrrolidone carboxylic acid. Disulfide bonds link Cys10/Cys41, Cys22/Cys54, and Cys40/Cys45.

This sequence belongs to the insulin family. Heterodimer of a B chain and an A chain linked by two disulfide bonds.

It is found in the secreted. Its function is as follows. Relaxin is an ovarian hormone that acts with estrogen to produce dilatation of the birth canal in many mammals. This chain is Relaxin, found in Balaenoptera edeni (Pigmy Bryde's whale).